The sequence spans 126 residues: Large ribosomal subunit protein bL17 (126 aa).

Belongs to the bacterial ribosomal protein bL17 family. Part of the 50S ribosomal subunit. Contacts protein L32.

This is Large ribosomal subunit protein bL17 from Coxiella burnetii (strain CbuG_Q212) (Coxiella burnetii (strain Q212)).